The following is a 516-amino-acid chain: D-aminopeptidase (516 aa).

The Nucleophile role is filled by Ser-61. The active-site Proton donor/acceptor is the Lys-64. The important for specificity stretch occupies residues 476-486; that stretch reads RRSMDAPAPGD. Asp-480 serves as a coordination point for substrate.

This sequence belongs to the peptidase S12 family. In terms of assembly, homodimer.

The enzyme catalyses Release of an N-terminal D-amino acid from a peptide, Xaa-|-Yaa-, in which Xaa is preferably D-Ala, D-Ser or D-Thr. D-amino acid amides and methyl esters also are hydrolyzed, as is glycine amide.. Its activity is regulated as follows. Inhibited by beta-lactam compounds such as 6-aminopenicillic acid, 7-aminocephalosporanic acid, benzylpenicillin and ampicillin. Inhibited by p-chloromercuribenzoate. Functionally, hydrolyzes N-terminal residues in D-amino acid-containing peptides. In Cereibacter sphaeroides (strain ATCC 17029 / ATH 2.4.9) (Rhodobacter sphaeroides), this protein is D-aminopeptidase.